The sequence spans 202 residues: Nudix hydrolase 13, mitochondrial (202 aa).

A Nudix hydrolase domain is found at 18 to 167 (NFRLVSGCIP…WMQSALEEFL (150 aa)). Residues 65 to 86 (GGWEDDETVLEAASREAMEEAG) carry the Nudix box motif. Residues Glu80 and Glu84 each coordinate Mg(2+).

The protein belongs to the Nudix hydrolase family. In terms of assembly, monomer. It depends on Mg(2+) as a cofactor. In terms of tissue distribution, expressed in roots, leaves, stems and inflorescences.

It localises to the mitochondrion. Its activity is regulated as follows. Inhibited by fluoride. Mediates the hydrolysis of some nucleoside diphosphate derivatives. Can use diadenosine 5',5'''-P(1)P(6) hexaphosphate (Ap(6)A), diadenosine 5',5'''-P(1)P(5) pentaphosphate (Ap(5)A) and adenosine tetraphosphate (p(4)A) as substrates, but not diadenosine 5',5'''-P(1)P(4) tetraphosphate (Ap(4)A), diadenosine 5',5'''-P(1)P(3) triphosphate (Ap(3)A), deoxyribonucleoside triphosphates, ribonucleoside triphosphates, diphosphoinositol pentakisphosphate (PP-InsP(5)) and 5-phospho-alpha-D-ribosyl diphosphate (PRPP). The chain is Nudix hydrolase 13, mitochondrial (NUDT13) from Arabidopsis thaliana (Mouse-ear cress).